We begin with the raw amino-acid sequence, 248 residues long: Probable transcriptional regulatory protein Psyr_1407 (248 aa).

It belongs to the TACO1 family.

Its subcellular location is the cytoplasm. The sequence is that of Probable transcriptional regulatory protein Psyr_1407 from Pseudomonas syringae pv. syringae (strain B728a).